The primary structure comprises 488 residues: (S)-canadine synthase CYP719A21 (488 aa).

A helical membrane pass occupies residues 6–26 (LWILTLISTILAVFAAVLIIF). Heme is bound at residue Cys432.

Belongs to the cytochrome P450 family. It depends on heme as a cofactor.

The protein localises to the membrane. The catalysed reaction is (S)-tetrahydrocolumbamine + reduced [NADPH--hemoprotein reductase] + O2 = (S)-canadine + oxidized [NADPH--hemoprotein reductase] + 2 H2O + H(+). It participates in alkaloid biosynthesis. Cytochrome P450 involved in the biosynthesis of the benzylisoquinoline alkaloid noscapine. Converts (S)-tetrahydrocolumbamine to (S)-canadine. This chain is (S)-canadine synthase CYP719A21, found in Papaver somniferum (Opium poppy).